Here is a 227-residue protein sequence, read N- to C-terminus: Cleavage and polyadenylation specificity factor subunit 5 (227 aa).

Ser-2 is subject to N-acetylserine. The necessary for RNA-binding stretch occupies residues 2–147 (SVVPPNRSQT…DWVIDDCIGN (146 aa)). Arg-15 is modified (omega-N-methylarginine). 2 positions are modified to N6-acetyllysine: Lys-23 and Lys-29. At Tyr-40 the chain carries Phosphotyrosine. Position 56 is an N6-acetyllysine (Lys-56). Residues 76-201 (MRRTVEGVLI…KLVAAPLFEL (126 aa)) form the Nudix hydrolase domain. The segment at 81-160 (EGVLIVHEHR…PNFEPPQYPY (80 aa)) is necessary for interactions with PAPOLA and PABPN1. The interaction with RNA stretch occupies residues 102 to 104 (TFF). The Nudix box motif lies at 109 to 130 (GELNPGEDEVEGLKRLMTEILG).

This sequence belongs to the Nudix hydrolase family. CPSF5 subfamily. Homodimer (via N- and C-terminus); binds RNA as homodimer. Component of the cleavage factor Im (CFIm) complex which is a heterotetramer composed of two subunits of NUDT21/CPSF5 and two subunits of CPSF6 or CPSF7 or a heterodimer of CPSF6 and CPSF7. The cleavage factor Im (CFIm) complex associates with the CPSF and CSTF complexes to promote the assembly of the core mRNA 3'-processing machinery. Interacts with CPSF6 (via the RRM domain); this interaction is direct and enhances binding to RNA. Interacts with CPSF7. Interacts with FIP1L1; this interaction occurs in a RNA sequence-specific manner. Interacts with PABPN1. Interacts (via N-terminus) with PAPOLA (via C-terminus); this interaction is direct and diminished by acetylation. Interacts with SNRNP70. Interacts with VIRMA. Post-translationally, acetylated mainly by p300/CBP, recruited to the complex by CPSF6. Acetylation decreases interaction with PAPAO. Deacetylated by the class I/II HDACs, HDAC1, HDAC3 and HDAC10, and by the class III HDACs, SIRT1 and SIRT2.

It localises to the nucleus. The protein resides in the cytoplasm. In terms of biological role, component of the cleavage factor Im (CFIm) complex that functions as an activator of the pre-mRNA 3'-end cleavage and polyadenylation processing required for the maturation of pre-mRNA into functional mRNAs. CFIm contributes to the recruitment of multiprotein complexes on specific sequences on the pre-mRNA 3'-end, so called cleavage and polyadenylation signals (pA signals). Most pre-mRNAs contain multiple pA signals, resulting in alternative cleavage and polyadenylation (APA) producing mRNAs with variable 3'-end formation. The CFIm complex acts as a key regulator of cleavage and polyadenylation site choice during APA through its binding to 5'-UGUA-3' elements localized in the 3'-untranslated region (UTR) for a huge number of pre-mRNAs. NUDT21/CPSF5 activates indirectly the mRNA 3'-processing machinery by recruiting CPSF6 and/or CPSF7. Binds to 5'-UGUA-3' elements localized upstream of pA signals that act as enhancers of pre-mRNA 3'-end processing. The homodimer mediates simultaneous sequence-specific recognition of two 5'-UGUA-3' elements within the pre-mRNA. Plays a role in somatic cell fate transitions and pluripotency by regulating widespread changes in gene expression through an APA-dependent function. Binds to chromatin. Binds to, but does not hydrolyze mono- and di-adenosine nucleotides. In Bos taurus (Bovine), this protein is Cleavage and polyadenylation specificity factor subunit 5 (NUDT21).